Reading from the N-terminus, the 747-residue chain is ATP-dependent DNA helicase Hel308 (747 aa).

Residues Q29 and 47–54 (VPTASGKT) each bind ATP. In terms of domain architecture, Helicase ATP-binding spans 34–200 (DAGVADGESL…WLDAELVDSS (167 aa)). Positions 145 to 148 (DEVH) match the DEAH box motif. The Helicase C-terminal domain maps to 234–434 (PTEAVVRETL…REPSMRTHLL (201 aa)). Positions 711-747 (AAGHQQPEMDGVTPDADVKESAAAAGTDDGQANLGDF) are disordered.

Belongs to the helicase family. Hel308 subfamily. In terms of assembly, monomer.

The enzyme catalyses Couples ATP hydrolysis with the unwinding of duplex DNA by translocating in the 3'-5' direction.. It carries out the reaction ATP + H2O = ADP + phosphate + H(+). Its function is as follows. DNA-dependent ATPase and 3'-5' DNA helicase that may be involved in repair of stalled replication forks. The chain is ATP-dependent DNA helicase Hel308 from Natronomonas pharaonis (strain ATCC 35678 / DSM 2160 / CIP 103997 / JCM 8858 / NBRC 14720 / NCIMB 2260 / Gabara) (Halobacterium pharaonis).